We begin with the raw amino-acid sequence, 150 residues long: 3-dehydroquinate dehydratase (150 aa).

Tyr-26 (proton acceptor) is an active-site residue. Substrate-binding residues include Asn-77, His-83, and Asp-90. His-103 serves as the catalytic Proton donor. Substrate is bound by residues 104–105 and Arg-114; that span reads IS.

It belongs to the type-II 3-dehydroquinase family. In terms of assembly, homododecamer.

It catalyses the reaction 3-dehydroquinate = 3-dehydroshikimate + H2O. The protein operates within metabolic intermediate biosynthesis; chorismate biosynthesis; chorismate from D-erythrose 4-phosphate and phosphoenolpyruvate: step 3/7. Catalyzes a trans-dehydration via an enolate intermediate. The polypeptide is 3-dehydroquinate dehydratase (Buchnera aphidicola subsp. Acyrthosiphon pisum (strain 5A)).